A 565-amino-acid chain; its full sequence is Adenine deaminase (565 aa).

Belongs to the metallo-dependent hydrolases superfamily. Adenine deaminase family. Requires Mn(2+) as cofactor.

It carries out the reaction adenine + H2O + H(+) = hypoxanthine + NH4(+). The sequence is that of Adenine deaminase from Cereibacter sphaeroides (strain ATCC 17025 / ATH 2.4.3) (Rhodobacter sphaeroides).